Consider the following 95-residue polypeptide: Aspartyl/glutamyl-tRNA(Asn/Gln) amidotransferase subunit C (95 aa).

The protein belongs to the GatC family. In terms of assembly, heterotrimer of A, B and C subunits.

The catalysed reaction is L-glutamyl-tRNA(Gln) + L-glutamine + ATP + H2O = L-glutaminyl-tRNA(Gln) + L-glutamate + ADP + phosphate + H(+). The enzyme catalyses L-aspartyl-tRNA(Asn) + L-glutamine + ATP + H2O = L-asparaginyl-tRNA(Asn) + L-glutamate + ADP + phosphate + 2 H(+). In terms of biological role, allows the formation of correctly charged Asn-tRNA(Asn) or Gln-tRNA(Gln) through the transamidation of misacylated Asp-tRNA(Asn) or Glu-tRNA(Gln) in organisms which lack either or both of asparaginyl-tRNA or glutaminyl-tRNA synthetases. The reaction takes place in the presence of glutamine and ATP through an activated phospho-Asp-tRNA(Asn) or phospho-Glu-tRNA(Gln). In Caulobacter sp. (strain K31), this protein is Aspartyl/glutamyl-tRNA(Asn/Gln) amidotransferase subunit C.